The chain runs to 294 residues: NAD kinase (294 aa).

The active-site Proton acceptor is Asp74. NAD(+)-binding positions include Asp74–Gly75, Asn148–Glu149, His159, Arg176, Asp178, Thr189–Ser194, and Gln249.

This sequence belongs to the NAD kinase family. It depends on a divalent metal cation as a cofactor.

The protein resides in the cytoplasm. The enzyme catalyses NAD(+) + ATP = ADP + NADP(+) + H(+). In terms of biological role, involved in the regulation of the intracellular balance of NAD and NADP, and is a key enzyme in the biosynthesis of NADP. Catalyzes specifically the phosphorylation on 2'-hydroxyl of the adenosine moiety of NAD to yield NADP. This Vibrio vulnificus (strain CMCP6) protein is NAD kinase.